We begin with the raw amino-acid sequence, 221 residues long: Thiamine-phosphate synthase (221 aa).

Residues 41–45 (QLRDK) and Asn-82 contribute to the 4-amino-2-methyl-5-(diphosphooxymethyl)pyrimidine site. Mg(2+) contacts are provided by Asp-83 and Asp-102. Ser-120 contributes to the 4-amino-2-methyl-5-(diphosphooxymethyl)pyrimidine binding site. Residue 146 to 148 (TPT) coordinates 2-[(2R,5Z)-2-carboxy-4-methylthiazol-5(2H)-ylidene]ethyl phosphate. Lys-149 contacts 4-amino-2-methyl-5-(diphosphooxymethyl)pyrimidine. A 2-[(2R,5Z)-2-carboxy-4-methylthiazol-5(2H)-ylidene]ethyl phosphate-binding site is contributed by Gly-177.

Belongs to the thiamine-phosphate synthase family. Mg(2+) is required as a cofactor.

It catalyses the reaction 2-[(2R,5Z)-2-carboxy-4-methylthiazol-5(2H)-ylidene]ethyl phosphate + 4-amino-2-methyl-5-(diphosphooxymethyl)pyrimidine + 2 H(+) = thiamine phosphate + CO2 + diphosphate. The enzyme catalyses 2-(2-carboxy-4-methylthiazol-5-yl)ethyl phosphate + 4-amino-2-methyl-5-(diphosphooxymethyl)pyrimidine + 2 H(+) = thiamine phosphate + CO2 + diphosphate. It carries out the reaction 4-methyl-5-(2-phosphooxyethyl)-thiazole + 4-amino-2-methyl-5-(diphosphooxymethyl)pyrimidine + H(+) = thiamine phosphate + diphosphate. Its pathway is cofactor biosynthesis; thiamine diphosphate biosynthesis; thiamine phosphate from 4-amino-2-methyl-5-diphosphomethylpyrimidine and 4-methyl-5-(2-phosphoethyl)-thiazole: step 1/1. Functionally, condenses 4-methyl-5-(beta-hydroxyethyl)thiazole monophosphate (THZ-P) and 2-methyl-4-amino-5-hydroxymethyl pyrimidine pyrophosphate (HMP-PP) to form thiamine monophosphate (TMP). The protein is Thiamine-phosphate synthase of Mycolicibacterium vanbaalenii (strain DSM 7251 / JCM 13017 / BCRC 16820 / KCTC 9966 / NRRL B-24157 / PYR-1) (Mycobacterium vanbaalenii).